The primary structure comprises 449 residues: Uric acid permease PucJ (449 aa).

13 helical membrane passes run 11–31 (LSLQHVLAMYAGAILVPLLVG), 41–61 (LSYLLAIDLLTCGVATLLQTL), 67–87 (GIGLPVMLGSSFVAVTPMIAI), 91–111 (YGIHAIYGSIIAAGVFIFLFA), 119–139 (VLFPPVVTGTVVTLIGLSLVP), 158–178 (EYGSLENLLLSVGVLVLILVL), 191–211 (VLIGIAAGTAAAAIMGKVSFS), 229–249 (APAFEIGPILTMLIVGIVIIV), 277–297 (AEGIAILIGGLFNAFPYNTFA), 313–333 (IVVTAGCILVCLGLIPKIAAL), 334–354 (ASAVPAAVLGGATVVMFGMVI), 372–392 (LLTIACSIALGIGASTAPGIF), and 401–421 (ILVSDGTITGSLTAIFLNLFF).

The protein belongs to the nucleobase:cation symporter-2 (NCS2) (TC 2.A.40) family.

It is found in the cell membrane. Functionally, uptake of uric acid. The chain is Uric acid permease PucJ (pucJ) from Bacillus subtilis (strain 168).